The primary structure comprises 362 residues: UDP-N-acetylglucosamine--N-acetylmuramyl-(pentapeptide) pyrophosphoryl-undecaprenol N-acetylglucosamine transferase (362 aa).

UDP-N-acetyl-alpha-D-glucosamine is bound by residues 15-17, asparagine 127, arginine 165, serine 191, isoleucine 247, 266-271, and glutamine 292; these read TGG and ALTVSE.

The protein belongs to the glycosyltransferase 28 family. MurG subfamily.

It is found in the cell inner membrane. The enzyme catalyses di-trans,octa-cis-undecaprenyl diphospho-N-acetyl-alpha-D-muramoyl-L-alanyl-D-glutamyl-meso-2,6-diaminopimeloyl-D-alanyl-D-alanine + UDP-N-acetyl-alpha-D-glucosamine = di-trans,octa-cis-undecaprenyl diphospho-[N-acetyl-alpha-D-glucosaminyl-(1-&gt;4)]-N-acetyl-alpha-D-muramoyl-L-alanyl-D-glutamyl-meso-2,6-diaminopimeloyl-D-alanyl-D-alanine + UDP + H(+). Its pathway is cell wall biogenesis; peptidoglycan biosynthesis. Cell wall formation. Catalyzes the transfer of a GlcNAc subunit on undecaprenyl-pyrophosphoryl-MurNAc-pentapeptide (lipid intermediate I) to form undecaprenyl-pyrophosphoryl-MurNAc-(pentapeptide)GlcNAc (lipid intermediate II). The sequence is that of UDP-N-acetylglucosamine--N-acetylmuramyl-(pentapeptide) pyrophosphoryl-undecaprenol N-acetylglucosamine transferase from Shewanella baltica (strain OS185).